We begin with the raw amino-acid sequence, 450 residues long: MSAIQAAWPSGTECIAKYNFHGTAEQDLPFCKGDVLTIVAVTKDPNWYKAKNKVGREGIIPANYVQKREGVKAGTKLSLMPWFHGKITREQAERLLYPPETGLFLVRESTNYPGDYTLCVSCEGKVEHYRIMYHASKLSIDEEVYFENLMQLVEHYTTDADGLCTRLIKPKVMEGTVAAQDEFYRSGWALNMKELKLLQTIGKGEFGDVMLGDYRGNKVAVKCIKNDATAQAFLAEASVMTQLRHSNLVQLLGVIVEEKGGLYIVTEYMAKGSLVDYLRSRGRSVLGGDCLLKFSLDVCEAMEYLEGNNFVHRDLAARNVLVSEDNVAKVSDFGLTKEASSTQDTGKLPVKWTAPEALREKKFSTKSDVWSFGILLWEIYSFGRVPYPRIPLKDVVPRVEKGYKMDAPDGCPPAVYEVMKNCWHLDAATRPTFLQLREQLEHIKTHELHL.

Position 2 is an N-acetylserine (Ser-2). An SH3 domain is found at 9–70 (PSGTECIAKY…PANYVQKREG (62 aa)). An interaction with PTPN22 region spans residues 9-70 (PSGTECIAKY…PANYVQKREG (62 aa)). The region spanning 82-171 (WFHGKITREQ…GLCTRLIKPK (90 aa)) is the SH2 domain. Tyr-184 bears the Phosphotyrosine mark. The Protein kinase domain maps to 195-449 (LKLLQTIGKG…LEHIKTHELH (255 aa)). ATP is bound by residues 201–209 (IGKGEFGDV) and Lys-222. Residue Tyr-304 is modified to Phosphotyrosine. The active-site Proton acceptor is the Asp-314. The residue at position 364 (Ser-364) is a Phosphoserine; by PKA. Tyr-416 bears the Phosphotyrosine; by autocatalysis mark.

This sequence belongs to the protein kinase superfamily. Tyr protein kinase family. CSK subfamily. Homodimer (via SH3-domain). Interacts with PTPN22. Interacts with phosphorylated SIT1, PAG1, LIME1 and TGFB1I1; these interactions serve to recruit CSK to the membrane where it can phosphorylate and inhibit Src-family kinases. Interacts with SRCIN1. Interacts with RHOH. Interacts (via SH2 domain) with SCIMP; this interaction is dependent on phosphorylation of SCIMP 'Tyr-96'. Interacts (via SH2 domain) with PRAG1 (when phosphorylated at 'Tyr-391'); this interaction prevents translocation of CSK from the cytoplasm to the membrane leading to increased activity of CSK. Interacts with LRRK1. The cofactor is Mg(2+). Mn(2+) serves as cofactor. In terms of processing, phosphorylated at Ser-364 by PKA, leading to increased activity. Autophosphorylated. Ubiquitous, but most abundant in thymus and spleen, as well as in neonatal brain.

It is found in the cytoplasm. Its subcellular location is the cell membrane. It carries out the reaction L-tyrosyl-[protein] + ATP = O-phospho-L-tyrosyl-[protein] + ADP + H(+). Functionally, non-receptor tyrosine-protein kinase that plays an important role in the regulation of cell growth, differentiation, migration and immune response. Phosphorylates tyrosine residues located in the C-terminal tails of Src-family kinases (SFKs) including LCK, SRC, HCK, FYN, LYN, CSK or YES1. Upon tail phosphorylation, Src-family members engage in intramolecular interactions between the phosphotyrosine tail and the SH2 domain that result in an inactive conformation. To inhibit SFKs, CSK is recruited to the plasma membrane via binding to transmembrane proteins or adapter proteins located near the plasma membrane. Suppresses signaling by various surface receptors, including T-cell receptor (TCR) and B-cell receptor (BCR) by phosphorylating and maintaining inactive several positive effectors such as FYN or LCK. The polypeptide is Tyrosine-protein kinase CSK (Csk) (Mus musculus (Mouse)).